Reading from the N-terminus, the 131-residue chain is MATRHQVRQAVVSLLYAHEMGSEMNEFKDEFLEEKKIRNERKIQALETFDAICLKKGELDEILKPYLKEKDIERIGIVELAILRLGVYEMKFTGTDKAVIINEAIELAKELGGDSAPKFINGVLDALKGEM.

It belongs to the NusB family.

Functionally, involved in transcription antitermination. Required for transcription of ribosomal RNA (rRNA) genes. Binds specifically to the boxA antiterminator sequence of the ribosomal RNA (rrn) operons. The polypeptide is Transcription antitermination protein NusB (Campylobacter curvus (strain 525.92)).